Here is a 1025-residue protein sequence, read N- to C-terminus: Beta-galactosidase (1025 aa).

The substrate site is built by asparagine 105 and aspartate 204. Residue aspartate 204 participates in Na(+) binding. Mg(2+)-binding residues include glutamate 417, histidine 419, and glutamate 462. Residues glutamate 462 and 538–541 each bind substrate; that span reads EYAH. The Proton donor role is filled by glutamate 462. Glutamate 538 (nucleophile) is an active-site residue. Residue asparagine 598 coordinates Mg(2+). 2 residues coordinate Na(+): phenylalanine 602 and asparagine 605. Positions 605 and 1003 each coordinate substrate.

This sequence belongs to the glycosyl hydrolase 2 family. In terms of assembly, homotetramer. It depends on Mg(2+) as a cofactor. Na(+) serves as cofactor.

The enzyme catalyses Hydrolysis of terminal non-reducing beta-D-galactose residues in beta-D-galactosides.. The polypeptide is Beta-galactosidase (Aeromonas hydrophila subsp. hydrophila (strain ATCC 7966 / DSM 30187 / BCRC 13018 / CCUG 14551 / JCM 1027 / KCTC 2358 / NCIMB 9240 / NCTC 8049)).